The following is a 150-amino-acid chain: UPF0506 protein SJCHGC02381 (150 aa).

An N-terminal signal peptide occupies residues 1–18 (MNTCIQLLILCLVTVINS). 8 N-linked (GlcNAc...) asparagine glycosylation sites follow: Asn-20, Asn-24, Asn-32, Asn-36, Asn-48, Asn-52, Asn-64, and Asn-110. Residues 22 to 49 (TDNSTENTIKNETENATETELPETFENE) form a disordered region. Over residues 36-49 (NATETELPETFENE) the composition is skewed to acidic residues. 3 disulfides stabilise this stretch: Cys-116–Cys-130, Cys-123–Cys-134, and Cys-129–Cys-139.

It belongs to the UPF0506 family.

It is found in the secreted. The chain is UPF0506 protein SJCHGC02381 from Schistosoma japonicum (Blood fluke).